We begin with the raw amino-acid sequence, 326 residues long: UDP-N-acetylglucosamine transporter (326 aa).

The next 8 membrane-spanning stretches (helical) occupy residues 4–24 (NLKYLSLGILVFQTTSLVLTM), 38–58 (LSSTAVVVAEFLKIMACIFLV), 136–156 (LGMYQWLSLVILMAGVAFVQW), 174–194 (FVGLMAVLIACFSSGFAGVYF), 212–232 (LGFFGSIFGLMGVYVYDGELV), 243–263 (QLTWIVVVLQALGGLVIAAVI), 269–289 (ILKGFATSLSIILSTIISYFW), and 293–313 (FVPTSVFFLGAILVIAATFLY).

This sequence belongs to the nucleotide-sugar transporter family. SLC35A subfamily. Interacts with SLC35A2; the interaction is reduced in the presence of SLC35A4. Found in a complex with SLC35A2 and SLC35A4. Interacts with MGAT4B. Post-translationally, O-Glcnacylation regulates the stability of SLC35A3 and the specific complex formation with MGAT4B.

The protein resides in the golgi apparatus membrane. It catalyses the reaction UMP(out) + UDP-N-acetyl-alpha-D-glucosamine(in) = UMP(in) + UDP-N-acetyl-alpha-D-glucosamine(out). Its function is as follows. Transports diphosphate-N-acetylglucosamine (UDP-GlcNAc) from the cytosol into the lumen of the Golgi apparatus, functioning as an antiporter that exchanges UDP-N-acetyl-alpha-D-glucosamine for UMP. May supply UDP-GlcNAc as substrate for Golgi-resident glycosyltransferases that generate highly branched, multiantennary complex N-glycans and keratan sulfate. However, the exact role of SLC35A3 still needs to be elucidated, it could be a member of a catalytically more efficient multiprotein complex rather than function independently as a single transporter. The sequence is that of UDP-N-acetylglucosamine transporter (Slc35a3) from Rattus norvegicus (Rat).